Consider the following 195-residue polypeptide: Interferon tau-5 (195 aa).

A signal peptide spans 1 to 23 (MAFVLSLLMALVLVSYGPGGSLG). Intrachain disulfides connect Cys-24–Cys-122 and Cys-52–Cys-162.

This sequence belongs to the alpha/beta interferon family. IFN-alphaII subfamily. In terms of tissue distribution, constitutively and exclusively expressed in the mononuclear cells of the extraembryonic trophectoderm.

It localises to the secreted. Paracrine hormone primarily responsible for maternal recognition of pregnancy. Interacts with endometrial receptors, probably type I interferon receptors, and blocks estrogen receptor expression, preventing the estrogen-induced increase in oxytocin receptor expression in the endometrium. This results in the suppression of the pulsatile endometrial release of the luteolytic hormone prostaglandin F2-alpha, hindering the regression of the corpus luteum (luteolysis) and therefore a return to ovarian cyclicity. This, and a possible direct effect of IFN-tau on prostaglandin synthesis, leads in turn to continued ovarian progesterone secretion, which stimulates the secretion by the endometrium of the nutrients required for the growth of the conceptus. In summary, displays particularly high antiviral and antiproliferative potency concurrently with particular weak cytotoxicity, high antiluteolytic activity and immunomodulatory properties. In contrast with other IFNs, IFN-tau is not virally inducible. The polypeptide is Interferon tau-5 (IFNT5) (Ovis aries (Sheep)).